We begin with the raw amino-acid sequence, 504 residues long: Cytochrome P450 monooxygenase braC (504 aa).

A helical membrane pass occupies residues 4 to 24 (LYLPTIWASTLTAATIFIVAV). Cys-448 contacts heme.

The protein belongs to the cytochrome P450 family. It depends on heme as a cofactor.

The protein localises to the membrane. It participates in secondary metabolite biosynthesis. Functionally, cytochrome P450 monooxygenase; part of the gene cluster that mediates the biosynthesis of the brasilane terpene glycosides brasilane D and E. The biosynthesis starts with the activity of the terpene cyclase braA that converts farnesyl pyrophosphate into the sesquiterpene alcohol trichobrasilenol. Subsequently, trichobrasilenol is glycosylated by the O-glycosyltransferase braB putatively using UDP-GlcNAc as sugar donor to yield brasilane A. The latter then undergoes two rounds of oxidation performed by the cytochrome P450 monooxygenase braC. In the first round braC hydroxylates C-12 forming brasilane D, which serves as substrate in the second round to establish the epoxide at the bond between C-5 and C-10 and oxidize the alcohol at C-12 to an aldehyde leading to the final product brasilane E. The protein is Cytochrome P450 monooxygenase braC of Annulohypoxylon truncatum (Hypoxylon truncatum).